The following is a 169-amino-acid chain: MYTYSLLNLSHCRRQTRKKRKTDHTEGFLMEETKPKTVEDVETVDVYTAKGFLSTGHRYLDVRTNEEFAKSHVEEALNIPYMFKTDEGRVINPDFLSQVASVCKKDEHLIVACNAGGRGSRACVDLLNEGYDHVANMGGGYSAWVDAGFAGDKPPEDLKIACKFRPKEN.

A mitochondrion-targeting transit peptide spans 1–59 (MYTYSLLNLSHCRRQTRKKRKTDHTEGFLMEETKPKTVEDVETVDVYTAKGFLSTGHRY). A Rhodanese domain is found at 60–153 (LDVRTNEEFA…WVDAGFAGDK (94 aa)). Catalysis depends on Cys-113, which acts as the Cysteine persulfide intermediate.

Expressed in root hairs, epidermal cells at the surface of the root and in the pericycle within the stele.

The protein localises to the mitochondrion. The catalysed reaction is [glutaredoxin]-dithiol + arsenate + glutathione + H(+) = glutathionyl-S-S-[glutaredoxin] + arsenite + H2O. With respect to regulation, inhibited by trobenzenesulphonic acid (TNBS). Its function is as follows. Arsenate reductase critical for arsenic tolerance. Reduces arsenate to arsenite in the root, facilitating efflux of arsenic back into the soil to limit both its accumulation in the root and transport to the shoot. Essential for arsenite efflux from the root, but not necessary for arsenate uptake. This chain is Protein HIGH ARSENIC CONTENT 1, mitochondrial, found in Arabidopsis thaliana (Mouse-ear cress).